Here is a 251-residue protein sequence, read N- to C-terminus: MKKAGLLFLVMIVIAVVAAGIGYWKLTGEESDTLRKIVLEECLPNQQQNQNPSPCAEVKPNAGYVVLKDLNGPLQYLLMPTYRINGTESPLLTDPSTPNFFWLAWQARDFMSKKYGQPVPDRAVSLAINSRTGRTQNHFHIHISCIRPDVRKQLDNNLANISSRWLPLPGGLRGHEYLARRVTESELVQRSPFMMLAEEVPEAREHMGRYGLAMVRQSDNSFVLLATQRNLLTLNRASAEEIQDHQCEILR.

Residues 4-24 (AGLLFLVMIVIAVVAAGIGYW) form a helical membrane-spanning segment.

The protein belongs to the Cdh family.

Its subcellular location is the cell inner membrane. The catalysed reaction is a CDP-1,2-diacyl-sn-glycerol + H2O = a 1,2-diacyl-sn-glycero-3-phosphate + CMP + 2 H(+). It participates in phospholipid metabolism; CDP-diacylglycerol degradation; phosphatidate from CDP-diacylglycerol: step 1/1. The protein is CDP-diacylglycerol pyrophosphatase of Escherichia coli (strain K12 / MC4100 / BW2952).